Reading from the N-terminus, the 150-residue chain is Testis-expressed protein 22 (150 aa).

Residues 1–23 show a composition bias toward basic and acidic residues; sequence MDSRKLSPRGKKLESHLSQEHRR. The interval 1–26 is disordered; sequence MDSRKLSPRGKKLESHLSQEHRRPPL.

It localises to the cytoplasm. Its subcellular location is the cytoplasmic vesicle. It is found in the secretory vesicle. The protein resides in the acrosome. The sequence is that of Testis-expressed protein 22 (TEX22) from Homo sapiens (Human).